Here is an 80-residue protein sequence, read N- to C-terminus: U-actitoxin-Avd9a (80 aa).

An N-terminal signal peptide occupies residues 1 to 20 (MNLKVLAVFVLCAILVVVTA). A propeptide spanning residues 21–39 (ERRGTETGVYKKDTLQDLI) is cleaved from the precursor. The 36-residue stretch at 45 to 80 (CIDRFPTGTCKQVKKGGSCKNSDKYRMNCRKTCGLC) folds into the ShKT domain. 3 cysteine pairs are disulfide-bonded: Cys45/Cys80, Cys54/Cys73, and Cys63/Cys77. A crucial for binding to potassium channels region spans residues 68 to 69 (KY).

This sequence belongs to the sea anemone type 1 potassium channel toxin family. Type 1b subfamily.

It localises to the secreted. Its subcellular location is the nematocyst. Its function is as follows. Inhibits voltage-gated potassium channels (Kv1/KCNA). The chain is U-actitoxin-Avd9a from Anemonia viridis (Snakelocks anemone).